Reading from the N-terminus, the 172-residue chain is GTP-dependent dephospho-CoA kinase (172 aa).

GTP-binding residues include D49, V50, V51, D68, K70, and E120.

It belongs to the GTP-dependent DPCK family.

It catalyses the reaction 3'-dephospho-CoA + GTP = GDP + CoA + H(+). The protein operates within cofactor biosynthesis; coenzyme A biosynthesis. In terms of biological role, catalyzes the GTP-dependent phosphorylation of the 3'-hydroxyl group of dephosphocoenzyme A to form coenzyme A (CoA). The protein is GTP-dependent dephospho-CoA kinase of Pyrobaculum arsenaticum (strain DSM 13514 / JCM 11321 / PZ6).